The sequence spans 259 residues: Phosphatidylserine decarboxylase proenzyme (259 aa).

Active-site charge relay system; for autoendoproteolytic cleavage activity residues include Asp-86, His-142, and Ser-226. Ser-226 acts as the Schiff-base intermediate with substrate; via pyruvic acid; for decarboxylase activity in catalysis. Residue Ser-226 is modified to Pyruvic acid (Ser); by autocatalysis.

Belongs to the phosphatidylserine decarboxylase family. PSD-B subfamily. Prokaryotic type I sub-subfamily. In terms of assembly, heterodimer of a large membrane-associated beta subunit and a small pyruvoyl-containing alpha subunit. Pyruvate serves as cofactor. Post-translationally, is synthesized initially as an inactive proenzyme. Formation of the active enzyme involves a self-maturation process in which the active site pyruvoyl group is generated from an internal serine residue via an autocatalytic post-translational modification. Two non-identical subunits are generated from the proenzyme in this reaction, and the pyruvate is formed at the N-terminus of the alpha chain, which is derived from the carboxyl end of the proenzyme. The autoendoproteolytic cleavage occurs by a canonical serine protease mechanism, in which the side chain hydroxyl group of the serine supplies its oxygen atom to form the C-terminus of the beta chain, while the remainder of the serine residue undergoes an oxidative deamination to produce ammonia and the pyruvoyl prosthetic group on the alpha chain. During this reaction, the Ser that is part of the protease active site of the proenzyme becomes the pyruvoyl prosthetic group, which constitutes an essential element of the active site of the mature decarboxylase.

It localises to the cell membrane. It catalyses the reaction a 1,2-diacyl-sn-glycero-3-phospho-L-serine + H(+) = a 1,2-diacyl-sn-glycero-3-phosphoethanolamine + CO2. It functions in the pathway phospholipid metabolism; phosphatidylethanolamine biosynthesis; phosphatidylethanolamine from CDP-diacylglycerol: step 2/2. In terms of biological role, catalyzes the formation of phosphatidylethanolamine (PtdEtn) from phosphatidylserine (PtdSer). In Geobacillus sp. (strain WCH70), this protein is Phosphatidylserine decarboxylase proenzyme.